Reading from the N-terminus, the 262-residue chain is Putative 1-acyl-sn-glycerol-3-phosphate acyltransferase acl-1 (262 aa).

3 helical membrane passes run 3–23 (FLAI…PVIG), 29–49 (VYFG…SIPF), and 89–109 (IIIA…AWPV). Residues 94–99 (HQSALD) carry the HXXXXD motif motif.

This sequence belongs to the 1-acyl-sn-glycerol-3-phosphate acyltransferase family.

The protein resides in the membrane. The enzyme catalyses a 1-acyl-sn-glycero-3-phosphate + an acyl-CoA = a 1,2-diacyl-sn-glycero-3-phosphate + CoA. It participates in phospholipid metabolism; CDP-diacylglycerol biosynthesis; CDP-diacylglycerol from sn-glycerol 3-phosphate: step 2/3. In terms of biological role, converts lysophosphatidic acid (LPA) into phosphatidic acid by incorporating an acyl moiety at the sn-2 position of the glycerol backbone. In Caenorhabditis elegans, this protein is Putative 1-acyl-sn-glycerol-3-phosphate acyltransferase acl-1 (acl-1).